Here is a 328-residue protein sequence, read N- to C-terminus: MSAVAPDGRKMLRLEVRNAQTPIERKPEWIKTRAKMGPEYTKMQNLVKSEGLHTVCQEAGCPNIYECWEDREATFLIGGDQCTRRCDFCQIDTGKPEALDRDEPRRVGESVVTMDLNYATITGVARDDLEDGGAWLYAETVRQIHAQTAGREAGRTKVELLAPDFNAEPDQLAEVFSARPEVFAHNVETVPRIFKRIRPGFRYERSLKVITEARDYGLVTKSNLILGMGETREEVSEALRQLHDAGCELITITQYLRPSVRHHPVERWVKPHEFVELKEEAEEIGFSGVMSGPLVRSSYRAGRLYQMAMELRQSAAPQGGAQVASQAV.

Positions 56, 61, 67, 82, 86, 89, and 298 each coordinate [4Fe-4S] cluster. Positions 68 to 287 constitute a Radical SAM core domain; that stretch reads WEDREATFLI…KEEAEEIGFS (220 aa).

It belongs to the radical SAM superfamily. Lipoyl synthase family. [4Fe-4S] cluster serves as cofactor.

Its subcellular location is the cytoplasm. It carries out the reaction [[Fe-S] cluster scaffold protein carrying a second [4Fe-4S](2+) cluster] + N(6)-octanoyl-L-lysyl-[protein] + 2 oxidized [2Fe-2S]-[ferredoxin] + 2 S-adenosyl-L-methionine + 4 H(+) = [[Fe-S] cluster scaffold protein] + N(6)-[(R)-dihydrolipoyl]-L-lysyl-[protein] + 4 Fe(3+) + 2 hydrogen sulfide + 2 5'-deoxyadenosine + 2 L-methionine + 2 reduced [2Fe-2S]-[ferredoxin]. Its pathway is protein modification; protein lipoylation via endogenous pathway; protein N(6)-(lipoyl)lysine from octanoyl-[acyl-carrier-protein]: step 2/2. Its function is as follows. Catalyzes the radical-mediated insertion of two sulfur atoms into the C-6 and C-8 positions of the octanoyl moiety bound to the lipoyl domains of lipoate-dependent enzymes, thereby converting the octanoylated domains into lipoylated derivatives. The sequence is that of Lipoyl synthase from Streptomyces avermitilis (strain ATCC 31267 / DSM 46492 / JCM 5070 / NBRC 14893 / NCIMB 12804 / NRRL 8165 / MA-4680).